Here is a 247-residue protein sequence, read N- to C-terminus: Molybdate/tungstate transport system permease protein WtpB (247 aa).

Residues 1-8 are Cytoplasmic-facing; sequence MRRDYTLY. A helical membrane pass occupies residues 9–29; it reads LFAALGTFLIAYIAVPIAVIF. Residues 30-55 lie on the Extracellular side of the membrane; it reads LKQASDVEMLVKTLHDPYVIEAIRNS. The ABC transmembrane type-1 domain occupies 52-238; that stretch reads IRNSLLTATA…SLSLGIFVIL (187 aa). The chain crosses the membrane as a helical span at residues 56–76; that stretch reads LLTATATALIALLFGVPLGYV. Topologically, residues 77–90 are cytoplasmic; it reads LARKDFPGKSAVQA. Residues 91 to 111 traverse the membrane as a helical segment; the sequence is LVDVPIVIPHSVVGIMLLVTF. Residues 112 to 114 lie on the Extracellular side of the membrane; it reads SNS. The chain crosses the membrane as a helical span at residues 115 to 135; that stretch reads ILDSYKGIVAAMLFVSAPFTI. The Cytoplasmic portion of the chain corresponds to 136–163; the sequence is NAARDGFLAVDEKLEAVARTLGASRWRA. The chain crosses the membrane as a helical span at residues 164-184; that stretch reads FLSISLPMAFPSIASGAIMTW. The Extracellular portion of the chain corresponds to 185–222; sequence ARAISEVGAILIVAYYPKTAQVLILEYFNNYGLRASRP. Residues 223–243 traverse the membrane as a helical segment; sequence IAVIMVSLSLGIFVILRWLVG. At 244–247 the chain is on the cytoplasmic side; that stretch reads RKNA.

This sequence belongs to the binding-protein-dependent transport system permease family. As to quaternary structure, the complex is composed of two ATP-binding proteins (WtpC), two transmembrane proteins (WtpB) and a solute-binding protein (WtpA).

The protein resides in the cell membrane. Part of the ABC transporter complex WtpABC involved in molybdate/tungstate import. Probably responsible for the translocation of the substrate across the membrane. In Thermococcus kodakarensis (strain ATCC BAA-918 / JCM 12380 / KOD1) (Pyrococcus kodakaraensis (strain KOD1)), this protein is Molybdate/tungstate transport system permease protein WtpB (wtpB).